Reading from the N-terminus, the 266-residue chain is Large ribosomal subunit protein uL4 (266 aa).

The protein belongs to the universal ribosomal protein uL4 family. Part of the 50S ribosomal subunit.

Functionally, one of the primary rRNA binding proteins, this protein initially binds near the 5'-end of the 23S rRNA. It is important during the early stages of 50S assembly. It makes multiple contacts with different domains of the 23S rRNA in the assembled 50S subunit and ribosome. Its function is as follows. Forms part of the polypeptide exit tunnel. The chain is Large ribosomal subunit protein uL4 from Sulfolobus acidocaldarius (strain ATCC 33909 / DSM 639 / JCM 8929 / NBRC 15157 / NCIMB 11770).